The sequence spans 83 residues: MPQIKSAIKRVKTQAVANERNAAQLSTMRTAVKKFKAAQAAGADNASELYVAAIRELDKAASKGLIHKNKATRDKSRLAKLAK.

It belongs to the bacterial ribosomal protein bS20 family.

In terms of biological role, binds directly to 16S ribosomal RNA. In Lactobacillus delbrueckii subsp. bulgaricus (strain ATCC 11842 / DSM 20081 / BCRC 10696 / JCM 1002 / NBRC 13953 / NCIMB 11778 / NCTC 12712 / WDCM 00102 / Lb 14), this protein is Small ribosomal subunit protein bS20.